Reading from the N-terminus, the 226-residue chain is Deoxyribose-phosphate aldolase (226 aa).

D94 acts as the Proton donor/acceptor in catalysis. K156 (schiff-base intermediate with acetaldehyde) is an active-site residue. Catalysis depends on K185, which acts as the Proton donor/acceptor.

It belongs to the DeoC/FbaB aldolase family. DeoC type 1 subfamily.

Its subcellular location is the cytoplasm. The catalysed reaction is 2-deoxy-D-ribose 5-phosphate = D-glyceraldehyde 3-phosphate + acetaldehyde. Its pathway is carbohydrate degradation; 2-deoxy-D-ribose 1-phosphate degradation; D-glyceraldehyde 3-phosphate and acetaldehyde from 2-deoxy-alpha-D-ribose 1-phosphate: step 2/2. Catalyzes a reversible aldol reaction between acetaldehyde and D-glyceraldehyde 3-phosphate to generate 2-deoxy-D-ribose 5-phosphate. The sequence is that of Deoxyribose-phosphate aldolase from Burkholderia orbicola (strain MC0-3).